The chain runs to 207 residues: Redox-sensing transcriptional repressor Rex (207 aa).

Residues 17–56 (IYLRYLSYLQQVEVTTVSSQQMGKNLDVNPAQIRKDLAAF) constitute a DNA-binding region (H-T-H motif). Residue 91–96 (GAGHLG) participates in NAD(+) binding.

Belongs to the transcriptional regulatory Rex family. In terms of assembly, homodimer.

It localises to the cytoplasm. Its function is as follows. Modulates transcription in response to changes in cellular NADH/NAD(+) redox state. In Brevibacillus brevis (strain 47 / JCM 6285 / NBRC 100599), this protein is Redox-sensing transcriptional repressor Rex.